Here is a 61-residue protein sequence, read N- to C-terminus: Large ribosomal subunit protein bL28 (61 aa).

It belongs to the bacterial ribosomal protein bL28 family.

The polypeptide is Large ribosomal subunit protein bL28 (Geobacillus sp. (strain WCH70)).